Reading from the N-terminus, the 335-residue chain is Vitamin B12 import system permease protein BtuC (335 aa).

9 helical membrane-spanning segments follow: residues Phe-21–Trp-43, Phe-63–Val-82, Gly-95–Phe-114, Pro-119–Phe-141, Leu-153–Thr-175, Trp-195–Ser-212, Phe-244–Val-266, Thr-281–Leu-303, and Val-310–Leu-329.

Belongs to the binding-protein-dependent transport system permease family. FecCD subfamily. The complex is composed of two ATP-binding proteins (BtuD), two transmembrane proteins (BtuC) and a solute-binding protein (BtuF).

The protein resides in the cell inner membrane. Part of the ABC transporter complex BtuCDF involved in vitamin B12 import. Involved in the translocation of the substrate across the membrane. The protein is Vitamin B12 import system permease protein BtuC of Photorhabdus laumondii subsp. laumondii (strain DSM 15139 / CIP 105565 / TT01) (Photorhabdus luminescens subsp. laumondii).